The following is a 530-amino-acid chain: Meiosis 1 arrest protein (530 aa).

Residues 463-530 (LHPHWESRAP…SEWEKDPSRP (68 aa)) form a disordered region. A compositionally biased stretch (low complexity) spans 503-516 (ASKMPAASKSSSDA).

The protein localises to the cytoplasm. Its function is as follows. Required for meiosis I progression during spermatogenesis. The chain is Meiosis 1 arrest protein (M1AP) from Homo sapiens (Human).